A 199-amino-acid polypeptide reads, in one-letter code: Imidazoleglycerol-phosphate dehydratase (199 aa).

Belongs to the imidazoleglycerol-phosphate dehydratase family.

It is found in the cytoplasm. The enzyme catalyses D-erythro-1-(imidazol-4-yl)glycerol 3-phosphate = 3-(imidazol-4-yl)-2-oxopropyl phosphate + H2O. It participates in amino-acid biosynthesis; L-histidine biosynthesis; L-histidine from 5-phospho-alpha-D-ribose 1-diphosphate: step 6/9. In Lactococcus lactis subsp. cremoris (strain MG1363), this protein is Imidazoleglycerol-phosphate dehydratase.